Consider the following 589-residue polypeptide: Phenylalanine--tRNA ligase beta subunit (589 aa).

The B5 domain maps to 290 to 368 (LNPTCFKADI…IAYGYDNLKH (79 aa)). Positions 346, 352, 355, and 356 each coordinate Mg(2+).

The protein belongs to the phenylalanyl-tRNA synthetase beta subunit family. Type 2 subfamily. As to quaternary structure, tetramer of two alpha and two beta subunits. Mg(2+) serves as cofactor.

Its subcellular location is the cytoplasm. It localises to the nucleus. It catalyses the reaction tRNA(Phe) + L-phenylalanine + ATP = L-phenylalanyl-tRNA(Phe) + AMP + diphosphate + H(+). The polypeptide is Phenylalanine--tRNA ligase beta subunit (frs1) (Schizosaccharomyces pombe (strain 972 / ATCC 24843) (Fission yeast)).